The chain runs to 105 residues: Sulfite reductase, dissimilatory-type subunit gamma (105 aa).

This sequence belongs to the DsrC/TusE family. Heterohexamer of two alpha, two beta and two gamma subunits.

It localises to the cytoplasm. The catalysed reaction is [DsrC protein]-trisulfide + NAD(+) + 3 H2O = [DsrC protein]-dithiol + sulfite + NADH + 3 H(+). Catalyzes the reduction of sulfite to sulfide. This is the terminal oxidation reaction in sulfate respiration, a process catalyzed by the sulfate-reducing bacteria. This is Sulfite reductase, dissimilatory-type subunit gamma (dsvC) from Nitratidesulfovibrio vulgaris (strain ATCC 29579 / DSM 644 / CCUG 34227 / NCIMB 8303 / VKM B-1760 / Hildenborough) (Desulfovibrio vulgaris).